Here is an 872-residue protein sequence, read N- to C-terminus: Alanine--tRNA ligase (872 aa).

The Zn(2+) site is built by histidine 567, histidine 571, cysteine 669, and histidine 673.

The protein belongs to the class-II aminoacyl-tRNA synthetase family. Zn(2+) is required as a cofactor.

It is found in the cytoplasm. The enzyme catalyses tRNA(Ala) + L-alanine + ATP = L-alanyl-tRNA(Ala) + AMP + diphosphate. Functionally, catalyzes the attachment of alanine to tRNA(Ala) in a two-step reaction: alanine is first activated by ATP to form Ala-AMP and then transferred to the acceptor end of tRNA(Ala). Also edits incorrectly charged Ser-tRNA(Ala) and Gly-tRNA(Ala) via its editing domain. The polypeptide is Alanine--tRNA ligase (Streptococcus pyogenes serotype M12 (strain MGAS2096)).